The primary structure comprises 566 residues: NAD-dependent malic enzyme 3 (566 aa).

Tyrosine 105 acts as the Proton donor in catalysis. Lysine 178 (proton acceptor) is an active-site residue. Residues glutamate 249, aspartate 250, and aspartate 273 each contribute to the a divalent metal cation site. NAD(+)-binding positions include 306–309 (AGTA), asparagine 423, and asparagine 468.

The protein belongs to the malic enzymes family. Requires Mg(2+) as cofactor. The cofactor is Mn(2+).

It carries out the reaction (S)-malate + NAD(+) = pyruvate + CO2 + NADH. It catalyses the reaction oxaloacetate + H(+) = pyruvate + CO2. Its function is as follows. Catalyzes the decarboxylation of malate to pyruvate. Can use NAD and NADP, but with a strong preference for NAD. Can also catalyze the decarboxylation of oxaloacetate. Involved in keeping the ATP levels high. The chain is NAD-dependent malic enzyme 3 (malS) from Bacillus subtilis (strain 168).